A 610-amino-acid chain; its full sequence is Glutamine--fructose-6-phosphate aminotransferase [isomerizing] (610 aa).

The active-site Nucleophile; for GATase activity is the Cys-2. In terms of domain architecture, Glutamine amidotransferase type-2 spans 2-218 (CGIVGAVAQR…EGDVAEITRR (217 aa)). SIS domains follow at residues 286–426 (AAEI…QQGR) and 459–600 (LATD…VDQP). Lys-605 serves as the catalytic For Fru-6P isomerization activity.

Homodimer.

It localises to the cytoplasm. The enzyme catalyses D-fructose 6-phosphate + L-glutamine = D-glucosamine 6-phosphate + L-glutamate. Functionally, catalyzes the first step in hexosamine metabolism, converting fructose-6P into glucosamine-6P using glutamine as a nitrogen source. The protein is Glutamine--fructose-6-phosphate aminotransferase [isomerizing] of Vibrio vulnificus (strain YJ016).